A 92-amino-acid polypeptide reads, in one-letter code: Conotoxin Mr15.3 (92 aa).

Positions 1–20 (MSTLKMMLLILLLLLPMATF) are cleaved as a signal peptide. Positions 21-53 (DSDGQAIPGGGIPSAVNSRVRGDEKSGRSLEKR) are excised as a propeptide.

The protein belongs to the conotoxin N superfamily. In terms of processing, contains 4 disulfide bonds. In terms of tissue distribution, expressed by the venom duct.

The protein resides in the secreted. The protein is Conotoxin Mr15.3 of Conus marmoreus (Marble cone).